The chain runs to 283 residues: Flagellar filament 35 kDa core protein (283 aa).

The protein belongs to the bacterial flagellin family. As to quaternary structure, the flagellum consists of two outer layers around a core that contains several antigenically related polypeptides.

The protein localises to the periplasmic flagellum. The protein resides in the periplasm. Its function is as follows. Component of the core of the flagella. The chain is Flagellar filament 35 kDa core protein (flaB) from Leptospira interrogans serogroup Icterohaemorrhagiae serovar copenhageni (strain Fiocruz L1-130).